The chain runs to 388 residues: Leucine aminopeptidase 1 (388 aa).

The N-terminal stretch at 1–19 is a signal peptide; it reads MRSSVLFSLYAATLVAAVA. The propeptide occupies 20 to 88; sequence HPKDPQIVLQ…TLNHKLSTES (69 aa). N98 carries N-linked (GlcNAc...) asparagine glycosylation. Zn(2+)-binding residues include H187, D206, E245, and D272. The cysteines at positions 321 and 325 are disulfide-linked. H354 serves as a coordination point for Zn(2+).

The protein belongs to the peptidase M28 family. M28E subfamily. As to quaternary structure, monomer. The cofactor is Zn(2+).

Its subcellular location is the secreted. Functionally, extracellular aminopeptidase that allows assimilation of proteinaceous substrates. The chain is Leucine aminopeptidase 1 (LAP1) from Leptosphaeria maculans (strain JN3 / isolate v23.1.3 / race Av1-4-5-6-7-8) (Blackleg fungus).